The sequence spans 226 residues: Lipoprotein-releasing system ATP-binding protein LolD (226 aa).

The region spanning 5-226 (LRCEKISKFY…MADGVLREAS (222 aa)) is the ABC transporter domain. 41-48 (GSSGSGKS) is an ATP binding site.

The protein belongs to the ABC transporter superfamily. Lipoprotein translocase (TC 3.A.1.125) family. As to quaternary structure, the complex is composed of two ATP-binding proteins (LolD) and two transmembrane proteins (LolC and LolE).

It is found in the cell inner membrane. In terms of biological role, part of the ABC transporter complex LolCDE involved in the translocation of mature outer membrane-directed lipoproteins, from the inner membrane to the periplasmic chaperone, LolA. Responsible for the formation of the LolA-lipoprotein complex in an ATP-dependent manner. This chain is Lipoprotein-releasing system ATP-binding protein LolD, found in Haemophilus ducreyi (strain 35000HP / ATCC 700724).